The sequence spans 394 residues: p-hydroxybenzoate hydroxylase (394 aa).

FAD is bound by residues S13, E32, 42 to 47, and Q102; that span reads RIRAGV. Residues Y201, 212-214, and Y222 each bind substrate; that span reads SQR. Position 286 (D286) interacts with FAD. A substrate-binding site is contributed by P293. 299–300 lines the FAD pocket; the sequence is LN.

The protein belongs to the aromatic-ring hydroxylase family. As to quaternary structure, homodimer. FAD serves as cofactor.

It carries out the reaction 4-hydroxybenzoate + NADPH + O2 + H(+) = 3,4-dihydroxybenzoate + NADP(+) + H2O. It participates in aromatic compound metabolism; benzoate degradation via hydroxylation; 3,4-dihydroxybenzoate from benzoate: step 2/2. Functionally, catalyzes the incorporation of an atom of dioxygen into p-hydroxybenzoate (p-OHB) to form 3,4-dihydroxybenzoate (3,4DOHB). The reaction occurs in two parts: reduction of the flavin adenine dinucleotide (FAD) in the enzyme by reduced nicotinamide adenine dinucleotide phosphate (NADPH) in response to binding p-hydroxybenzoate to the enzyme and oxidation of reduced FAD with oxygen to form a hydroperoxide, which then oxygenates p-hydroxybenzoate. This is p-hydroxybenzoate hydroxylase (pobA) from Pseudomonas fluorescens.